The sequence spans 656 residues: MQSARMTPSVGRQLLRLGARSSRSTTVLQGQPRPISAQRLYAREATQAVLDKPETLSSDASTREKPARAESKSFAVGMFKGQLTIDQVFPYPSVLSEEQAQFLKELVGPVARFFEEVNDPAKNDALEKVEDDTLQGLKELGAFGLQVPSELGGLGLSNTQYARLAEIVGMHDLGVSVTLGAHQSIGFKGILLYGTKAQREKYLPRVASGQALAAFCLTEPSSGSDVASIRSSAIPSPCGKYYTLNGSKIWISNGGLADIFTVFAKTPIKDAATGAVKEKITAFVVERSFGGVTHGLPEKKMGIKASNTSEVYFDGVKVPSENVLGEVGDGFKVAVNILNNGRFGMAATLAGTMKSLIAKAVDHATNRTQFGDKIHNFGVIQEKLARMAILQYVTESMAYMLSANMDQGFKDFQIEAAISKIFCSEAAWKVADECIQIMGGMGFMKEPGVERVLRDIRIFRIFEGANDILRLFVALQGCMDKGKELTGLGNALKNPFGNVGLLMGEAGKQLRRRTGIGSGLSLSGIVHPELSRSGELAVQALDQFATVVEAKLVKHKKGIVNEQFLLQRLADGAIDLYAMVVVLSRASRSLSEGYPTAQHEKMLCDSWCIEAATRIRENMASLQSSPQHQELFRNFRSISKAMVENGGLVTGNPLGI.

Positions 1–33 (MQSARMTPSVGRQLLRLGARSSRSTTVLQGQPR) are disordered. The transit peptide at 1 to 41 (MQSARMTPSVGRQLLRLGARSSRSTTVLQGQPRPISAQRLY) directs the protein to the mitochondrion. A catalytic region spans residues 42 to 483 (AREATQAVLD…ALQGCMDKGK (442 aa)). An N6-acetyllysine modification is found at lysine 52. N6-acetyllysine; alternate occurs at positions 72 and 128. N6-succinyllysine; alternate is present on residues lysine 72 and lysine 128. Position 196 is an N6-succinyllysine (lysine 196). Position 215 to 224 (215 to 224 (FCLTEPSSGS)) interacts with FAD. S-nitrosocysteine is present on cysteine 238. Lysine 240 is modified (N6-acetyllysine; alternate). Lysine 240 carries the post-translational modification N6-succinyllysine; alternate. Position 250–252 (250–252 (WIS)) interacts with FAD. Lysine 269 is modified (N6-succinyllysine). An N6-acetyllysine; alternate mark is found at lysine 277 and lysine 279. An N6-succinyllysine; alternate mark is found at lysine 277 and lysine 279. N6-acetyllysine is present on residues lysine 299 and lysine 317. Lysine 332 bears the N6-acetyllysine; alternate mark. Lysine 332 carries the post-translational modification N6-succinyllysine; alternate. Lysine 373 carries the N6-succinyllysine modification. 462 to 464 (FEG) serves as a coordination point for substrate. Glutamate 463 functions as the Proton acceptor in the catalytic mechanism. Residue 465–467 (AND) participates in FAD binding. An N6-acetyllysine; alternate modification is found at lysine 483. Lysine 483 is modified (N6-succinyllysine; alternate). The interval 484–517 (ELTGLGNALKNPFGNVGLLMGEAGKQLRRRTGIG) is membrane-anchoring. Phosphoserine is present on residues serine 518 and serine 523. Position 551 is an N6-acetyllysine (lysine 551). Lysine 557 bears the N6-acetyllysine; alternate mark. An N6-succinyllysine; alternate modification is found at lysine 557. Glutamine 563 provides a ligand contact to FAD. Lysine 640 carries the N6-succinyllysine modification.

This sequence belongs to the acyl-CoA dehydrogenase family. In terms of assembly, homodimer. Homodimerizes after import into the mitochondrion. FAD serves as cofactor. S-nitrosylation at Cys-238 in liver improves catalytic efficiency.

It is found in the mitochondrion inner membrane. It carries out the reaction a very-long-chain 2,3-saturated fatty acyl-CoA + oxidized [electron-transfer flavoprotein] + H(+) = a very-long-chain (2E)-enoyl-CoA + reduced [electron-transfer flavoprotein]. The enzyme catalyses dodecanoyl-CoA + oxidized [electron-transfer flavoprotein] + H(+) = (2E)-dodecenoyl-CoA + reduced [electron-transfer flavoprotein]. It catalyses the reaction tetradecanoyl-CoA + oxidized [electron-transfer flavoprotein] + H(+) = (2E)-tetradecenoyl-CoA + reduced [electron-transfer flavoprotein]. The catalysed reaction is oxidized [electron-transfer flavoprotein] + hexadecanoyl-CoA + H(+) = (2E)-hexadecenoyl-CoA + reduced [electron-transfer flavoprotein]. It carries out the reaction octadecanoyl-CoA + oxidized [electron-transfer flavoprotein] + H(+) = (2E)-octadecenoyl-CoA + reduced [electron-transfer flavoprotein]. The enzyme catalyses eicosanoyl-CoA + oxidized [electron-transfer flavoprotein] + H(+) = (2E)-eicosenoyl-CoA + reduced [electron-transfer flavoprotein]. It catalyses the reaction docosanoyl-CoA + oxidized [electron-transfer flavoprotein] + H(+) = (2E)-docosenoyl-CoA + reduced [electron-transfer flavoprotein]. The catalysed reaction is tetracosanoyl-CoA + oxidized [electron-transfer flavoprotein] + H(+) = (2E)-tetracosenoyl-CoA + reduced [electron-transfer flavoprotein]. It participates in lipid metabolism; mitochondrial fatty acid beta-oxidation. Very long-chain specific acyl-CoA dehydrogenase is one of the acyl-CoA dehydrogenases that catalyze the first step of mitochondrial fatty acid beta-oxidation, an aerobic process breaking down fatty acids into acetyl-CoA and allowing the production of energy from fats. The first step of fatty acid beta-oxidation consists in the removal of one hydrogen from C-2 and C-3 of the straight-chain fatty acyl-CoA thioester, resulting in the formation of trans-2-enoyl-CoA. Among the different mitochondrial acyl-CoA dehydrogenases, very long-chain specific acyl-CoA dehydrogenase acts specifically on acyl-CoAs with saturated 12 to 24 carbons long primary chains. The chain is Very long-chain specific acyl-CoA dehydrogenase, mitochondrial from Mus musculus (Mouse).